Consider the following 128-residue polypeptide: Probable heavy metal-dependent transcriptional regulator HI_0293 (128 aa).

One can recognise an HTH merR-type domain in the interval 1 to 69 (MNISEAAKLV…LHQIAQLLAL (69 aa)). Residues 4 to 23 (SEAAKLVGLSTKQIRDYEKM) constitute a DNA-binding region (H-T-H motif).

The protein resides in the cytoplasm. Its function is as follows. Could be a copper-dependent transcriptional activator of the ATPase HI_0290. The polypeptide is Probable heavy metal-dependent transcriptional regulator HI_0293 (Haemophilus influenzae (strain ATCC 51907 / DSM 11121 / KW20 / Rd)).